The sequence spans 635 residues: Threonine--tRNA ligase (635 aa).

Residues 1-61 (MIKITLKDGS…ENDCTLNLLT (61 aa)) enclose the TGS domain. The tract at residues 242–532 (DHRKLGRELD…LTEHYAGAFP (291 aa)) is catalytic. Zn(2+)-binding residues include Cys-333, His-384, and His-509.

This sequence belongs to the class-II aminoacyl-tRNA synthetase family. Homodimer. Zn(2+) serves as cofactor.

Its subcellular location is the cytoplasm. It catalyses the reaction tRNA(Thr) + L-threonine + ATP = L-threonyl-tRNA(Thr) + AMP + diphosphate + H(+). Its function is as follows. Catalyzes the attachment of threonine to tRNA(Thr) in a two-step reaction: L-threonine is first activated by ATP to form Thr-AMP and then transferred to the acceptor end of tRNA(Thr). Also edits incorrectly charged L-seryl-tRNA(Thr). In Acetivibrio thermocellus (strain ATCC 27405 / DSM 1237 / JCM 9322 / NBRC 103400 / NCIMB 10682 / NRRL B-4536 / VPI 7372) (Clostridium thermocellum), this protein is Threonine--tRNA ligase.